The primary structure comprises 253 residues: Anamorsin homolog (253 aa).

Residues 4 to 129 (FKGLQKSLYI…ETGSSARLSF (126 aa)) form an N-terminal SAM-like domain region. The interval 130-161 (AKKNSSTLNVWKISGDDDELIDEEDLLDEVDK) is linker. [2Fe-2S] cluster-binding residues include Cys172, Cys181, Cys184, and Cys186. Residues 172-186 (CSTTGKRKACKNCSC) form a fe-S binding site A region. Residues Cys214, Cys217, Cys225, and Cys228 each contribute to the [4Fe-4S] cluster site. 2 short sequence motifs (cx2C motif) span residues 214 to 217 (CGNC) and 225 to 228 (CSSC). Residues 214–228 (CGNCYLGDAFRCSSC) are fe-S binding site B.

Belongs to the anamorsin family. Monomer. Requires [2Fe-2S] cluster as cofactor. It depends on [4Fe-4S] cluster as a cofactor.

It localises to the cytoplasm. The protein resides in the mitochondrion intermembrane space. Functionally, component of the cytosolic iron-sulfur (Fe-S) protein assembly (CIA) machinery. Required for the maturation of extramitochondrial Fe-S proteins. Part of an electron transfer chain functioning in an early step of cytosolic Fe-S biogenesis, facilitating the de novo assembly of a [4Fe-4S] cluster on the cytosolic Fe-S scaffold complex. Electrons are transferred from NADPH via a FAD- and FMN-containing diflavin oxidoreductase. Together with the diflavin oxidoreductase, also required for the assembly of the diferric tyrosyl radical cofactor of ribonucleotide reductase (RNR), probably by providing electrons for reduction during radical cofactor maturation in the catalytic small subunit. The polypeptide is Anamorsin homolog (Drosophila willistoni (Fruit fly)).